Consider the following 333-residue polypeptide: Ketol-acid reductoisomerase (NADP(+)) (333 aa).

The 181-residue stretch at 2–182 (ANIYYDADCD…GGGRAGILET (181 aa)) folds into the KARI N-terminal Rossmann domain. NADP(+) is bound by residues 25–28 (YGSQ), Lys48, Ser51, Ser53, and 83–86 (DTIQ). His108 is a catalytic residue. Gly134 contributes to the NADP(+) binding site. The region spanning 183–331 (SFREETETDL…KKLRSMMKWL (149 aa)) is the KARI C-terminal knotted domain. Residues Asp191, Glu195, Glu227, and Glu231 each contribute to the Mg(2+) site. Ser252 contacts substrate.

This sequence belongs to the ketol-acid reductoisomerase family. Requires Mg(2+) as cofactor.

The catalysed reaction is (2R)-2,3-dihydroxy-3-methylbutanoate + NADP(+) = (2S)-2-acetolactate + NADPH + H(+). It carries out the reaction (2R,3R)-2,3-dihydroxy-3-methylpentanoate + NADP(+) = (S)-2-ethyl-2-hydroxy-3-oxobutanoate + NADPH + H(+). It functions in the pathway amino-acid biosynthesis; L-isoleucine biosynthesis; L-isoleucine from 2-oxobutanoate: step 2/4. It participates in amino-acid biosynthesis; L-valine biosynthesis; L-valine from pyruvate: step 2/4. In terms of biological role, involved in the biosynthesis of branched-chain amino acids (BCAA). Catalyzes an alkyl-migration followed by a ketol-acid reduction of (S)-2-acetolactate (S2AL) to yield (R)-2,3-dihydroxy-isovalerate. In the isomerase reaction, S2AL is rearranged via a Mg-dependent methyl migration to produce 3-hydroxy-3-methyl-2-ketobutyrate (HMKB). In the reductase reaction, this 2-ketoacid undergoes a metal-dependent reduction by NADPH to yield (R)-2,3-dihydroxy-isovalerate. This Leptospira borgpetersenii serovar Hardjo-bovis (strain JB197) protein is Ketol-acid reductoisomerase (NADP(+)).